Consider the following 736-residue polypeptide: Myotubularin-related protein 12 (736 aa).

The Myotubularin phosphatase domain occupies 182-558 (YLRSTNPEML…RQLSLPSSAF (377 aa)). The tract at residues 672 to 691 (SLATQPDHPPPLHHRLPSFG) is disordered.

Belongs to the protein-tyrosine phosphatase family. Non-receptor class myotubularin subfamily. Heterodimer with lipid phosphatase mtm1. In skeletal muscles, the interaction stabilizes both mtmr12 and mtm1 protein levels.

The protein resides in the cytoplasm. The protein localises to the sarcoplasmic reticulum. It is found in the myofibril. Its subcellular location is the sarcomere. Acts as an adapter for the myotubularin phosphatase mtm1 to regulate mtm1 protein stability and possibly its intracellular location. By stabilizing mtm1 protein levels, required for skeletal muscle maintenance but not for myogenesis. In skeletal muscle cells, does not regulate mtm1 subcellular localization. In Danio rerio (Zebrafish), this protein is Myotubularin-related protein 12 (mtmr12).